A 486-amino-acid chain; its full sequence is Palmitoyltransferase pfa4 (486 aa).

Over 1-15 (MTNLQTGPTTRGLQR) the chain is Cytoplasmic. A helical transmembrane segment spans residues 16–36 (FAIPAVCGLIIFLGYYSQYLF). At 37–51 (NTSADLAPGPLTCRE) the chain is on the lumenal side. A helical membrane pass occupies residues 52–72 (SLIFNILLVCLWLTYYQACTV). Residues 73 to 146 (DPGQYKFPPK…NCVSLQTFPH (74 aa)) are Cytoplasmic-facing. Residues 81-91 (PKEKEDGDNNN) show a composition bias toward basic and acidic residues. The disordered stretch occupies residues 81-101 (PKEKEDGDNNNKRGGRGPQKA). Residues 102–152 (KWCKKCDAPKPPRAHHCRHCARCIPRMDHHCPWTGNCVSLQTFPHFLRFLV) enclose the DHHC domain. Catalysis depends on Cys132, which acts as the S-palmitoyl cysteine intermediate. The chain crosses the membrane as a helical span at residues 147-166 (FLRFLVYTNAALVYFARLLW). The Lumenal portion of the chain corresponds to 167–178 (TRLYYGLWDQRH). The helical transmembrane segment at 179 to 201 (VPAYLGPSVGALLGCTMLSIAWF) threads the bilayer. The Cytoplasmic portion of the chain corresponds to 202–486 (ATQFALMVLL…RKVKSNGVHE (285 aa)). The tract at residues 314-420 (NDRVGMWPPP…QDGRAWMNSE (107 aa)) is disordered. Basic and acidic residues-rich tracts occupy residues 324–333 (DPEKLRRERA) and 346–376 (LNTE…DLRR). A compositionally biased stretch (acidic residues) spans 386–399 (EEDEIMAELEEDEG).

It belongs to the DHHC palmitoyltransferase family. PFA4 subfamily.

The protein localises to the endoplasmic reticulum membrane. It carries out the reaction L-cysteinyl-[protein] + hexadecanoyl-CoA = S-hexadecanoyl-L-cysteinyl-[protein] + CoA. Functionally, mediates the reversible addition of palmitate to target proteins, thereby regulating their membrane association and biological function. The polypeptide is Palmitoyltransferase pfa4 (Neurospora crassa (strain ATCC 24698 / 74-OR23-1A / CBS 708.71 / DSM 1257 / FGSC 987)).